Here is a 394-residue protein sequence, read N- to C-terminus: Ornithine aminotransferase 1 (394 aa).

The residue at position 252 (lysine 252) is an N6-(pyridoxal phosphate)lysine.

Belongs to the class-III pyridoxal-phosphate-dependent aminotransferase family. OAT subfamily. It depends on pyridoxal 5'-phosphate as a cofactor.

The protein localises to the cytoplasm. The enzyme catalyses a 2-oxocarboxylate + L-ornithine = L-glutamate 5-semialdehyde + an L-alpha-amino acid. It functions in the pathway amino-acid biosynthesis; L-proline biosynthesis; L-glutamate 5-semialdehyde from L-ornithine: step 1/1. Functionally, catalyzes the interconversion of ornithine to glutamate semialdehyde. This Staphylococcus aureus (strain Mu50 / ATCC 700699) protein is Ornithine aminotransferase 1.